The chain runs to 303 residues: Dihydroorotate dehydrogenase B (NAD(+)), catalytic subunit (303 aa).

FMN-binding positions include S21 and K45–G46. Substrate-binding positions include K45 and N69–L73. 2 residues coordinate FMN: N99 and N127. Residue N127 coordinates substrate. C130 (nucleophile) is an active-site residue. Positions 165 and 191 each coordinate FMN. N192–T193 contributes to the substrate binding site. FMN is bound by residues G217, G243–G244, and G265–T266.

The protein belongs to the dihydroorotate dehydrogenase family. Type 1 subfamily. As to quaternary structure, heterotetramer of 2 PyrK and 2 PyrD type B subunits. Requires FMN as cofactor.

The protein localises to the cytoplasm. The catalysed reaction is (S)-dihydroorotate + NAD(+) = orotate + NADH + H(+). Its pathway is pyrimidine metabolism; UMP biosynthesis via de novo pathway; orotate from (S)-dihydroorotate (NAD(+) route): step 1/1. Catalyzes the conversion of dihydroorotate to orotate with NAD(+) as electron acceptor. The protein is Dihydroorotate dehydrogenase B (NAD(+)), catalytic subunit (pyrD) of Bacteroides fragilis (strain ATCC 25285 / DSM 2151 / CCUG 4856 / JCM 11019 / LMG 10263 / NCTC 9343 / Onslow / VPI 2553 / EN-2).